We begin with the raw amino-acid sequence, 285 residues long: VQ motif-containing protein 20 (285 aa).

Basic and acidic residues predominate over residues 1–10 (MSSTYKDNHP). Residues 1-68 (MSSTYKDNHP…PSPSSFSSAA (68 aa)) are disordered. A compositionally biased stretch (basic residues) spans 11 to 23 (YHHHPHHHHHHPK). Residues 91–100 (FMALVQKLTG) carry the VQ motif. The interval 195-218 (YSAVAIPPQPPPHPPPPPPPPSMY) is disordered. Over residues 201–216 (PPQPPPHPPPPPPPPS) the composition is skewed to pro residues.

It is found in the nucleus. Its function is as follows. May function as negative regulator of plant defense. This chain is VQ motif-containing protein 20, found in Arabidopsis thaliana (Mouse-ear cress).